We begin with the raw amino-acid sequence, 347 residues long: Quinolinate synthase (347 aa).

Residues histidine 47 and serine 68 each coordinate iminosuccinate. [4Fe-4S] cluster is bound at residue cysteine 113. Residues 139 to 141 and serine 156 each bind iminosuccinate; that span reads YAN. Residue cysteine 200 coordinates [4Fe-4S] cluster. Iminosuccinate is bound by residues 226 to 228 and threonine 243; that span reads HPE. Cysteine 297 serves as a coordination point for [4Fe-4S] cluster.

Belongs to the quinolinate synthase family. Type 1 subfamily. The cofactor is [4Fe-4S] cluster.

It localises to the cytoplasm. The catalysed reaction is iminosuccinate + dihydroxyacetone phosphate = quinolinate + phosphate + 2 H2O + H(+). It functions in the pathway cofactor biosynthesis; NAD(+) biosynthesis; quinolinate from iminoaspartate: step 1/1. Catalyzes the condensation of iminoaspartate with dihydroxyacetone phosphate to form quinolinate. The sequence is that of Quinolinate synthase from Salmonella choleraesuis (strain SC-B67).